Consider the following 479-residue polypeptide: B-cell CLL/lymphoma 6 member B protein (479 aa).

Residues 38-105 (TDVTLLVGGQ…MYTSRLRLSP (68 aa)) form the BTB domain. Disordered stretches follow at residues 143 to 190 (RPLE…PDPK) and 210 to 259 (GSLV…LSPT). Pro residues predominate over residues 147–160 (AEPPTPPTAPPPGS). Residues 162–172 (RRSEGHPDPPT) show a composition bias toward basic and acidic residues. Positions 234–244 (SSSSSSSSSSS) are enriched in low complexity. 5 consecutive C2H2-type zinc fingers follow at residues 328 to 350 (YKCQLCRSSFRYKGNLASHRTVH), 356 to 378 (YHCSICGARFNRPANLKTHSRIH), 384 to 406 (YKCETCGSRFVQVAHLRAHVLIH), 412 to 434 (YPCPTCGTRFRHLQTLKSHVRIH), and 440 to 463 (YHCDPCGLHFRHKSQLRLHLRQKH).

As to quaternary structure, associates with BCL6 through the BTB domain. As to expression, ubiquitously expressed with higher expression found in heart and placenta.

It is found in the nucleus. Functionally, acts as a sequence-specific transcriptional repressor in association with BCL6. May function in a narrow stage or be related to some events in the early B-cell development. This Homo sapiens (Human) protein is B-cell CLL/lymphoma 6 member B protein (BCL6B).